The primary structure comprises 651 residues: Protein RcaC (651 aa).

One can recognise a Response regulatory 1 domain in the interval Lys2–Leu116. At Asp51 the chain carries 4-aspartylphosphate. Positions Phe124 to Ala223 form a DNA-binding region, ompR/PhoB-type. Response regulatory domains are found at residues Leu384–Leu519 and Lys527–Leu643.

Functionally, required for chromatic adaptation. Thought to be a positive regulator of phycobiliproteins. This is Protein RcaC (rcaC) from Microchaete diplosiphon (Fremyella diplosiphon).